The following is a 283-amino-acid chain: Probable endonuclease 4 (283 aa).

9 residues coordinate Zn(2+): histidine 69, histidine 109, glutamate 144, aspartate 178, histidine 181, histidine 215, aspartate 228, histidine 230, and glutamate 260.

It belongs to the AP endonuclease 2 family. It depends on Zn(2+) as a cofactor.

It catalyses the reaction Endonucleolytic cleavage to 5'-phosphooligonucleotide end-products.. Functionally, endonuclease IV plays a role in DNA repair. It cleaves phosphodiester bonds at apurinic or apyrimidinic (AP) sites, generating a 3'-hydroxyl group and a 5'-terminal sugar phosphate. The sequence is that of Probable endonuclease 4 from Thermosipho melanesiensis (strain DSM 12029 / CIP 104789 / BI429).